The chain runs to 646 residues: Serine/threonine-protein kinase sck2 (646 aa).

Disordered regions lie at residues 17 to 85 (VSTN…LPEV) and 143 to 176 (GRDI…IQRT). The span at 68-80 (SDQSTVGNRNSND) shows a compositional bias: polar residues. A compositionally biased stretch (low complexity) spans 149-165 (SSRDSANVSRSSSMMSS). In terms of domain architecture, Protein kinase spans 266–527 (FVPLKLIGKG…VEEVMKHPFF (262 aa)). ATP contacts are provided by residues 272 to 280 (IGKGTFGQV) and Lys295. Asp392 acts as the Proton acceptor in catalysis. The AGC-kinase C-terminal domain occupies 528–605 (DGIDWKKLAA…IDASAMDEAF (78 aa)). Residues 609 to 646 (NSNDSASSISSQDDYSKDNSDMDLNRANDEVFMGQIDP) form a disordered region. Over residues 610-621 (SNDSASSISSQD) the composition is skewed to low complexity. A compositionally biased stretch (basic and acidic residues) spans 622–637 (DYSKDNSDMDLNRAND).

The protein belongs to the protein kinase superfamily. AGC Ser/Thr protein kinase family. PKC subfamily.

The catalysed reaction is L-seryl-[protein] + ATP = O-phospho-L-seryl-[protein] + ADP + H(+). It carries out the reaction L-threonyl-[protein] + ATP = O-phospho-L-threonyl-[protein] + ADP + H(+). Protein kinase that is part of growth control pathway which is at least partially redundant with the cAMP pathway. This Schizosaccharomyces pombe (strain 972 / ATCC 24843) (Fission yeast) protein is Serine/threonine-protein kinase sck2 (sck2).